The sequence spans 471 residues: Vanillate/3-O-methylgallate O-demethylase (471 aa).

Tyr31 serves as a coordination point for substrate. Gln57 is a binding site for (6S)-5,6,7,8-tetrahydrofolate. Substrate is bound at residue His60. 2 residues coordinate (6S)-5,6,7,8-tetrahydrofolate: Gln93 and Val120. Arg122 serves as a coordination point for substrate. Positions 165 and 215 each coordinate (6S)-5,6,7,8-tetrahydrofolate. A substrate-binding site is contributed by 247–250 (YPSN). Residue Trp256 participates in (6S)-5,6,7,8-tetrahydrofolate binding.

This sequence belongs to the GcvT family. Homodimer.

The catalysed reaction is vanillate + (6S)-5,6,7,8-tetrahydrofolate = (6S)-5-methyl-5,6,7,8-tetrahydrofolate + 3,4-dihydroxybenzoate. It catalyses the reaction 3-O-methylgallate + (6S)-5,6,7,8-tetrahydrofolate = 3,4,5-trihydroxybenzoate + (6S)-5-methyl-5,6,7,8-tetrahydrofolate. It participates in secondary metabolite metabolism; lignin degradation. Involved in the catabolism of vanillate and syringate. Catalyzes the transfer of a methyl moiety from vanillate or 3-O-methylgallate (3MGA) to tetrahydrofolate, forming protocatechuate (PCA) or gallate, respectively, and methyl-tetrahydrofolate. Has similar activities with both substrates. Cannot use syringate. Uses an ordered, sequential kinetic mechanism. The chain is Vanillate/3-O-methylgallate O-demethylase from Sphingobium sp. (strain NBRC 103272 / SYK-6).